We begin with the raw amino-acid sequence, 87 residues long: Small ribosomal subunit protein bS18 (87 aa).

It belongs to the bacterial ribosomal protein bS18 family. As to quaternary structure, part of the 30S ribosomal subunit. Forms a tight heterodimer with protein bS6.

Binds as a heterodimer with protein bS6 to the central domain of the 16S rRNA, where it helps stabilize the platform of the 30S subunit. This is Small ribosomal subunit protein bS18 from Nitratidesulfovibrio vulgaris (strain ATCC 29579 / DSM 644 / CCUG 34227 / NCIMB 8303 / VKM B-1760 / Hildenborough) (Desulfovibrio vulgaris).